An 886-amino-acid chain; its full sequence is Alanine--tRNA ligase (886 aa).

Positions 564, 568, 676, and 680 each coordinate Zn(2+).

This sequence belongs to the class-II aminoacyl-tRNA synthetase family. Requires Zn(2+) as cofactor.

The protein resides in the cytoplasm. The catalysed reaction is tRNA(Ala) + L-alanine + ATP = L-alanyl-tRNA(Ala) + AMP + diphosphate. Its function is as follows. Catalyzes the attachment of alanine to tRNA(Ala) in a two-step reaction: alanine is first activated by ATP to form Ala-AMP and then transferred to the acceptor end of tRNA(Ala). Also edits incorrectly charged Ser-tRNA(Ala) and Gly-tRNA(Ala) via its editing domain. The protein is Alanine--tRNA ligase of Bartonella bacilliformis.